Consider the following 790-residue polypeptide: Vacuolar protein sorting-associated protein 35B (790 aa).

This sequence belongs to the VPS35 family. Component of the retromer complex which consists of VPS29 (MAG1), VPS26 (VPS26A or VPS26B), VPS35 (VPS35A or VPS35B or VPS35C), VPS5/17 (SNX1 or SNX2A or SNX2B). Component of a retromer subcomplex consisting of VPS29 (MAG1), VPS26 (VPS26A or VPS26B), VPS35 (VPS35A or VPS35B or VPS35C). As to expression, expressed in siliques and maturing seeds (at protein level).

It is found in the cytoplasm. The protein resides in the endosome membrane. The protein localises to the prevacuolar compartment membrane. It localises to the golgi apparatus. Its subcellular location is the trans-Golgi network membrane. Functionally, plays a role in vesicular protein sorting. Component of the membrane-associated retromer complex which is essential in endosome-to-Golgi retrograde transport. Also involved in the efficient sorting of seed storage proteins globulin 12S and albumin 2S. The VPS29-VPS26-VPS35 subcomplex may be involved in recycling of specific cargos from endosome to the plasma membrane. This is Vacuolar protein sorting-associated protein 35B (VPS35B) from Arabidopsis thaliana (Mouse-ear cress).